The primary structure comprises 383 residues: Heme chaperone HemW (383 aa).

The 241-residue stretch at 1 to 241 (MPKLPPLSLY…LTMAGYQQYE (241 aa)) folds into the Radical SAM core domain. Residue Y10 participates in S-adenosyl-L-methionine binding. [4Fe-4S] cluster-binding residues include C16, C20, and C23. Residues G70, 71 to 72 (GT), E103, Q130, R142, and D167 each bind S-adenosyl-L-methionine.

This sequence belongs to the anaerobic coproporphyrinogen-III oxidase family. HemW subfamily. It depends on [4Fe-4S] cluster as a cofactor.

The protein localises to the cytoplasm. Probably acts as a heme chaperone, transferring heme to an unknown acceptor. Binds one molecule of heme per monomer, possibly covalently. Binds 1 [4Fe-4S] cluster. The cluster is coordinated with 3 cysteines and an exchangeable S-adenosyl-L-methionine. The protein is Heme chaperone HemW of Haemophilus influenzae (strain ATCC 51907 / DSM 11121 / KW20 / Rd).